The sequence spans 867 residues: Protein melted homolog (867 aa).

Residues 480–505 are disordered; the sequence is MPSSSRTNVHLSQAASSSRGHSLPQT. Residues 753–860 enclose the PH domain; that stretch reads EKVLEGQLKE…WLHCLQIAMA (108 aa).

The protein belongs to the MELT/VEPH family.

The protein localises to the cell membrane. In Caenorhabditis briggsae, this protein is Protein melted homolog.